Here is a 206-residue protein sequence, read N- to C-terminus: Large ribosomal subunit protein uL4 (206 aa).

It belongs to the universal ribosomal protein uL4 family. As to quaternary structure, part of the 50S ribosomal subunit.

Functionally, one of the primary rRNA binding proteins, this protein initially binds near the 5'-end of the 23S rRNA. It is important during the early stages of 50S assembly. It makes multiple contacts with different domains of the 23S rRNA in the assembled 50S subunit and ribosome. Its function is as follows. Forms part of the polypeptide exit tunnel. This is Large ribosomal subunit protein uL4 from Nitrobacter hamburgensis (strain DSM 10229 / NCIMB 13809 / X14).